An 885-amino-acid polypeptide reads, in one-letter code: Protein arg11, mitochondrial (885 aa).

The transit peptide at 1 to 59 (MLIELQQIVKSGLVRNGAKHCTKRSLLCSNASVIASKRFQGSFAPGQQQPLNPLAKPIE) directs the protein to the mitochondrion. One can recognise an N-acetyltransferase domain in the interval 346–499 (FVINKHDSLD…SDKPFADAII (154 aa)). Residues 503-523 (STKPPTASSTTNNPSSSQINQ) are compositionally biased toward low complexity. The disordered stretch occupies residues 503-532 (STKPPTASSTTNNPSSSQINQKRSYSTSSL). Residue Cys-703 is part of the active site.

It in the N-terminal section; belongs to the acetylglutamate kinase family. In the C-terminal section; belongs to the NAGSA dehydrogenase family. The protein precursor is probably cleaved into the two biologically active enzymes, the kinase and the reductase.

It localises to the mitochondrion. It carries out the reaction N-acetyl-L-glutamate 5-semialdehyde + phosphate + NADP(+) = N-acetyl-L-glutamyl 5-phosphate + NADPH + H(+). The catalysed reaction is N-acetyl-L-glutamate + ATP = N-acetyl-L-glutamyl 5-phosphate + ADP. It participates in amino-acid biosynthesis; L-arginine biosynthesis; N(2)-acetyl-L-ornithine from L-glutamate: step 2/4. The protein operates within amino-acid biosynthesis; L-arginine biosynthesis; N(2)-acetyl-L-ornithine from L-glutamate: step 3/4. Its activity is regulated as follows. The kinase activity is inhibited by arginine. The chain is Protein arg11, mitochondrial (arg11) from Schizosaccharomyces pombe (strain 972 / ATCC 24843) (Fission yeast).